We begin with the raw amino-acid sequence, 324 residues long: Ribosomal RNA small subunit methyltransferase H (324 aa).

S-adenosyl-L-methionine is bound by residues 40 to 42 (AGH), D60, L94, D108, and H115. Positions 301-324 (EEMKVNTRSRSAKLRVAERTGEDG) are disordered. Over residues 315 to 324 (RVAERTGEDG) the composition is skewed to basic and acidic residues.

It belongs to the methyltransferase superfamily. RsmH family.

It is found in the cytoplasm. It catalyses the reaction cytidine(1402) in 16S rRNA + S-adenosyl-L-methionine = N(4)-methylcytidine(1402) in 16S rRNA + S-adenosyl-L-homocysteine + H(+). In terms of biological role, specifically methylates the N4 position of cytidine in position 1402 (C1402) of 16S rRNA. The chain is Ribosomal RNA small subunit methyltransferase H from Maridesulfovibrio salexigens (strain ATCC 14822 / DSM 2638 / NCIMB 8403 / VKM B-1763) (Desulfovibrio salexigens).